The sequence spans 274 residues: Large ribosomal subunit protein uL2 (274 aa).

Disordered regions lie at residues 35–60 and 224–274; these read EPQH…GHKH and VMNP…RRKK. Over residues 50–60 the composition is skewed to basic residues; sequence TTRHKGGGHKH. Residues 229–246 are compositionally biased toward basic and acidic residues; it reads DHPHGGGEGKTGEGRHAV.

The protein belongs to the universal ribosomal protein uL2 family. In terms of assembly, part of the 50S ribosomal subunit. Forms a bridge to the 30S subunit in the 70S ribosome.

Its function is as follows. One of the primary rRNA binding proteins. Required for association of the 30S and 50S subunits to form the 70S ribosome, for tRNA binding and peptide bond formation. It has been suggested to have peptidyltransferase activity; this is somewhat controversial. Makes several contacts with the 16S rRNA in the 70S ribosome. This Delftia acidovorans (strain DSM 14801 / SPH-1) protein is Large ribosomal subunit protein uL2.